The following is a 138-amino-acid chain: Secreted RxLR effector protein 91 (138 aa).

Residues M1–C18 form the signal peptide. The RxLR motif lies at R34–R37. A glycan (N-linked (GlcNAc...) asparagine) is linked at N93.

The protein belongs to the RxLR effector family.

Its subcellular location is the secreted. The protein localises to the host nucleus. Secreted effector that completely suppresses the host cell death induced by cell death-inducing proteins. The chain is Secreted RxLR effector protein 91 from Plasmopara viticola (Downy mildew of grapevine).